The primary structure comprises 190 residues: MPSIHPSIDNGITKGDPNFKGGKLYCHCPTRKVEVTLAGNVAHNHACGCSKCWKPEGALFSVVGVISKDAVSVTANGDKLHIVDESAAIQRNACKECGVHLFGRIIVDHPFKGLDFVHAELSPQKGWQEPQFAAFVSSIIEQGFHPSEMDAIREKFRKVGLQPYDVLSPTLMDLIATYTAQKSGKLPAKL.

The region spanning 19–165 (FKGGKLYCHC…FRKVGLQPYD (147 aa)) is the CENP-V/GFA domain. The Zn(2+) site is built by C26, C28, C47, C49, C52, C94, and C97.

The protein belongs to the Gfa family. It depends on Zn(2+) as a cofactor.

It carries out the reaction S-(hydroxymethyl)glutathione = glutathione + formaldehyde. The protein operates within one-carbon metabolism; formaldehyde degradation; formate from formaldehyde (glutathione route): step 1/3. In terms of biological role, catalyzes the condensation of formaldehyde and glutathione to S-hydroxymethylglutathione. The polypeptide is Putative glutathione-dependent formaldehyde-activating enzyme (Pyrenophora teres f. teres (strain 0-1) (Barley net blotch fungus)).